An 874-amino-acid chain; its full sequence is Alanine--tRNA ligase (874 aa).

Residues histidine 562, histidine 566, cysteine 665, and histidine 669 each contribute to the Zn(2+) site.

It belongs to the class-II aminoacyl-tRNA synthetase family. The cofactor is Zn(2+).

It is found in the cytoplasm. The enzyme catalyses tRNA(Ala) + L-alanine + ATP = L-alanyl-tRNA(Ala) + AMP + diphosphate. Catalyzes the attachment of alanine to tRNA(Ala) in a two-step reaction: alanine is first activated by ATP to form Ala-AMP and then transferred to the acceptor end of tRNA(Ala). Also edits incorrectly charged Ser-tRNA(Ala) and Gly-tRNA(Ala) via its editing domain. This is Alanine--tRNA ligase from Pseudomonas putida (strain ATCC 47054 / DSM 6125 / CFBP 8728 / NCIMB 11950 / KT2440).